We begin with the raw amino-acid sequence, 496 residues long: Myotilin (496 aa).

The interval 1-37 is disordered; the sequence is MFNYERPKHFIQPQNPCGSRLQPPGPEVSGFPSQTKQ. Omega-N-methylarginine is present on Arg20. The necessary for interaction with ACTN1 stretch occupies residues 78-149; it reads PNPGQKVTAT…PTPKTPDHEI (72 aa). Composition is skewed to polar residues over residues 202–213 and 221–233; these read NSDVQDSPQHNP and PTSQ…SSRA. Residues 202–239 form a disordered region; it reads NSDVQDSPQHNPEQARLHVPTSQVRSRSSSRAEANDQD. Residues 213-491 form a necessary for interaction with FLNC region; it reads PEQARLHVPT…QRLAAQSGLY (279 aa). The interval 213–496 is necessary for interaction with ACTA1; the sequence is PEQARLHVPT…QSGLYESEEL (284 aa). 2 Ig-like C2-type domains span residues 248 to 333 and 347 to 439; these read PRFI…ATFT and PMFI…LDVT.

It belongs to the myotilin/palladin family. As to quaternary structure, homodimer. Interacts with ACTA1, ACTN1, FLNA, FLNB, FLNC, and MYOZ2. Interacts with the C-terminal region of MYOZ1. As to expression, expressed in skeletal muscle (at protein level).

It localises to the cell membrane. Its subcellular location is the sarcolemma. The protein localises to the cytoplasm. It is found in the cytoskeleton. The protein resides in the myofibril. It localises to the sarcomere. Its subcellular location is the z line. Functionally, component of a complex of multiple actin cross-linking proteins. Involved in the control of myofibril assembly and stability at the Z lines in muscle cells. The sequence is that of Myotilin (Myot) from Mus musculus (Mouse).